A 184-amino-acid polypeptide reads, in one-letter code: Peptidyl-tRNA hydrolase (184 aa).

Residue tyrosine 14 coordinates tRNA. Catalysis depends on histidine 19, which acts as the Proton acceptor. Residues phenylalanine 60 and asparagine 62 each contribute to the tRNA site.

Belongs to the PTH family. Monomer.

The protein resides in the cytoplasm. It carries out the reaction an N-acyl-L-alpha-aminoacyl-tRNA + H2O = an N-acyl-L-amino acid + a tRNA + H(+). Hydrolyzes ribosome-free peptidyl-tRNAs (with 1 or more amino acids incorporated), which drop off the ribosome during protein synthesis, or as a result of ribosome stalling. Its function is as follows. Catalyzes the release of premature peptidyl moieties from peptidyl-tRNA molecules trapped in stalled 50S ribosomal subunits, and thus maintains levels of free tRNAs and 50S ribosomes. In Mesomycoplasma hyopneumoniae (strain 7448) (Mycoplasma hyopneumoniae), this protein is Peptidyl-tRNA hydrolase.